Here is a 914-residue protein sequence, read N- to C-terminus: DNA mismatch repair protein MutS (914 aa).

Residues 1–24 form a disordered region; it reads MDNKTDNKNNLTPQSAPSSAPHKE. Over residues 8-18 the composition is skewed to polar residues; it reads KNNLTPQSAPS. Position 662 to 669 (662 to 669) interacts with ATP; sequence GPNMGGKS.

This sequence belongs to the DNA mismatch repair MutS family.

Functionally, this protein is involved in the repair of mismatches in DNA. It is possible that it carries out the mismatch recognition step. This protein has a weak ATPase activity. The protein is DNA mismatch repair protein MutS of Bartonella henselae (strain ATCC 49882 / DSM 28221 / CCUG 30454 / Houston 1) (Rochalimaea henselae).